The following is a 225-amino-acid chain: Phosphoribosylformylglycinamidine synthase subunit PurQ (225 aa).

One can recognise a Glutamine amidotransferase type-1 domain in the interval 5–225; sequence RFGIVVFPGS…WQSIVQSLAG (221 aa). The Nucleophile role is filled by C89. Residues H198 and E200 contribute to the active site.

As to quaternary structure, part of the FGAM synthase complex composed of 1 PurL, 1 PurQ and 2 PurS subunits.

The protein localises to the cytoplasm. It catalyses the reaction N(2)-formyl-N(1)-(5-phospho-beta-D-ribosyl)glycinamide + L-glutamine + ATP + H2O = 2-formamido-N(1)-(5-O-phospho-beta-D-ribosyl)acetamidine + L-glutamate + ADP + phosphate + H(+). The enzyme catalyses L-glutamine + H2O = L-glutamate + NH4(+). Its pathway is purine metabolism; IMP biosynthesis via de novo pathway; 5-amino-1-(5-phospho-D-ribosyl)imidazole from N(2)-formyl-N(1)-(5-phospho-D-ribosyl)glycinamide: step 1/2. Functionally, part of the phosphoribosylformylglycinamidine synthase complex involved in the purines biosynthetic pathway. Catalyzes the ATP-dependent conversion of formylglycinamide ribonucleotide (FGAR) and glutamine to yield formylglycinamidine ribonucleotide (FGAM) and glutamate. The FGAM synthase complex is composed of three subunits. PurQ produces an ammonia molecule by converting glutamine to glutamate. PurL transfers the ammonia molecule to FGAR to form FGAM in an ATP-dependent manner. PurS interacts with PurQ and PurL and is thought to assist in the transfer of the ammonia molecule from PurQ to PurL. The sequence is that of Phosphoribosylformylglycinamidine synthase subunit PurQ from Synechococcus sp. (strain JA-3-3Ab) (Cyanobacteria bacterium Yellowstone A-Prime).